The following is a 566-amino-acid chain: MRLTISRKFSLVFLTLILINLLVGGIGVLNMQHIIQKTDEINTKWIDGIKGITSINYVTEHLSSKEKDFLIYTDKSKMDTLDQEMNQIMEDINQKLDNYEKTISTDKEQKLFEQLQTKVNTYMDIHAQIIESGRTNDMDKARGLLVQTEASFEDMKKTITQLVDLNQEGSNTAVKETKAVYHKGLIYTALLVAASILISIFIWLYITRNIVKPIIRMKESANHIAEGDLSNDMEALNSKDELGDLNEALQKMVGNLRDIVGYSKDISSRVLSSSQVLATATNETRSGSKHITETMNEMAEGSEQQAQDAVTIAESMNEFTESIDKAYNHGITISDTSQNVLELAVSGNENMATSLQQMKTIHHIVEEAVHKVRSLEQHSQDINKLVQVINGIAEQTNLLSLNAAIEAARAGESGKGFAVVAEEVRKLADGVSDSVQDITRIVNGTQQEIHTVITYLESSFTEVEKGTENLTDTGQAMQHIKQSVTHVADSIKEVTDGLKQLTNQSITINQSIENIASVSEESAAGIEETFSITEQSAHSMDQVLLNAEELEQLANELNEKMGQFTI.

The first 31 residues, 1–31, serve as a signal peptide directing secretion; it reads MRLTISRKFSLVFLTLILINLLVGGIGVLNM. Residues 74 to 110 are a coiled coil; sequence DKSKMDTLDQEMNQIMEDINQKLDNYEKTISTDKEQK. A helical transmembrane segment spans residues 186-206; it reads IYTALLVAASILISIFIWLYI. In terms of domain architecture, HAMP spans 208-261; the sequence is RNIVKPIIRMKESANHIAEGDLSNDMEALNSKDELGDLNEALQKMVGNLRDIVG. Residues 280-530 enclose the Methyl-accepting transducer domain; sequence ATNETRSGSK…ESAAGIEETF (251 aa). Positions 536-566 form a coiled coil; sequence SAHSMDQVLLNAEELEQLANELNEKMGQFTI.

The protein belongs to the methyl-accepting chemotaxis (MCP) protein family.

The protein resides in the cell membrane. Its function is as follows. Chemotactic-signal transducers respond to changes in the concentration of attractants and repellents in the environment, transduce a signal from the outside to the inside of the cell, and facilitate sensory adaptation through the variation of the level of methylation. Attractants increase the level of methylation while repellents decrease the level of methylation. The chain is Putative sensory transducer protein YvaQ (yvaQ) from Bacillus subtilis (strain 168).